The following is a 791-amino-acid chain: Solute carrier family 26 member 9 (791 aa).

Residues 1-70 (MSQPRPRYVV…WLPKYKIKDY (70 aa)) lie on the Cytoplasmic side of the membrane. Residues 71-96 (IIPDLLGGLSGGSIQVPQGMAFALLA) traverse the membrane as a helical segment. Topologically, residues 97–99 (NLP) are extracellular. Residues 100-117 (AVNGLYSSFFPLLTYFFL) traverse the membrane as a helical segment. The Cytoplasmic portion of the chain corresponds to 118–128 (GGVHQMVPGTF). Residues 129 to 142 (AVISILVGNICLQL) form a helical membrane-spanning segment. Over 143 to 171 (APESKFQVFNNATNESYVDTAAMEAERLH) the chain is Extracellular. Residues 172-190 (VSATLACLTAIIQMGLGFM) traverse the membrane as a helical segment. The Cytoplasmic segment spans residues 191–202 (QFGFVAIYLSES). A helical transmembrane segment spans residues 203–224 (FIRGFMTAAGLQILISVLKYIF). Residues 225 to 235 (GLTIPSYTGPG) are Extracellular-facing. An intramembrane region (helical) is located at residues 236 to 244 (SIVFTFIDI). At 245 to 254 (CKNLPHTNIA) the chain is on the extracellular side. A helical membrane pass occupies residues 255–273 (SLIFALISGAFLVLVKELN). The Cytoplasmic segment spans residues 274 to 281 (ARYMHKIR). The chain crosses the membrane as a helical span at residues 282 to 297 (FPIPTEMIVVVVATAI). The Extracellular portion of the chain corresponds to 298–327 (SGGCKMPKKYHMQIVGEIQRGFPTPVSPVV). The helical transmembrane segment at 328-348 (SQWKDMIGTAFSLAIVSYVIN) threads the bilayer. At 349-366 (LAMGRTLANKHGYDVDSN) the chain is on the cytoplasmic side. A helical membrane pass occupies residues 367–382 (QEMIALGCSNFFGSFF). Topologically, residues 383-390 (KIHVICCA) are extracellular. A helical transmembrane segment spans residues 391–400 (LSVTLAVDGA). Topologically, residues 401–404 (GGKS) are cytoplasmic. The helical transmembrane segment at 405–423 (QVASLCVSLVVMITMLVLG) threads the bilayer. Topologically, residues 424–428 (IYLYP) are extracellular. The chain crosses the membrane as a helical span at residues 429–450 (LPKSVLGALIAVNLKNSLKQLT). Residues 451–464 (DPYYLWRKSKLDCC) lie on the Cytoplasmic side of the membrane. A helical transmembrane segment spans residues 465–476 (IWVVSFLSSFFL). Ser477 is a topological domain (extracellular). The helical transmembrane segment at 478 to 489 (LPYGVAVGVAFS) threads the bilayer. The Cytoplasmic portion of the chain corresponds to 490–791 (VLVVVFQTQF…MFHAETLTAL (302 aa)). The region spanning 519–737 (TYNRAQDIQG…PSIHDAVLFA (219 aa)) is the STAS domain. The segment at 602–650 (FENAPPTDPNNNQTPANGTSVSYITFSPDSSSPAQSEPPASAEAPGEPS) is disordered. Over residues 610 to 626 (PNNNQTPANGTSVSYIT) the composition is skewed to polar residues. Low complexity predominate over residues 628–650 (SPDSSSPAQSEPPASAEAPGEPS).

This sequence belongs to the SLC26A/SulP transporter (TC 2.A.53) family. Homodimer. As to expression, predominantly expressed in lung at the luminal side of the bronchiolar and alveolar epithelium of lung. To a lower extent, also expressed in pancreas and prostate.

The protein resides in the cell membrane. Its subcellular location is the endomembrane system. It catalyses the reaction chloride(in) = chloride(out). The enzyme catalyses hydrogencarbonate(in) + chloride(out) = hydrogencarbonate(out) + chloride(in). Its activity is regulated as follows. Inhibited by ammonium and thiosulfate. Ion transporter that can act both as an ion channel and anion exchanger. Mainly acts as a chloride channel, which mediate uncoupled chloride anion transport in an alternate-access mechanism where a saturable binding site is alternately exposed to either one or the other side of the membrane. Also acts as a DIDS- and thiosulfate- sensitive anion exchanger the exchange of chloride for bicarbonate ions across the cell membrane. The protein is Solute carrier family 26 member 9 of Homo sapiens (Human).